The primary structure comprises 458 residues: Putative U-box domain-containing protein 46 (458 aa).

The U-box domain occupies 71–144 (EVPKEFICTL…TQWCLVNKYD (74 aa)). ARM repeat units follow at residues 241 to 281 (ESNK…SLSA) and 283 to 322 (DSNK…NLCI).

The catalysed reaction is S-ubiquitinyl-[E2 ubiquitin-conjugating enzyme]-L-cysteine + [acceptor protein]-L-lysine = [E2 ubiquitin-conjugating enzyme]-L-cysteine + N(6)-ubiquitinyl-[acceptor protein]-L-lysine.. Its pathway is protein modification; protein ubiquitination. Functionally, functions as an E3 ubiquitin ligase. This Arabidopsis thaliana (Mouse-ear cress) protein is Putative U-box domain-containing protein 46 (PUB46).